The primary structure comprises 281 residues: Large ribosomal subunit protein uL2 (281 aa).

Residues 222 to 281 are disordered; that stretch reads TVRGSVMNPNDHPHGGGEGRTPIGRKSPVTPWGKKALGVKTRNTKKPSEKLIVRKRNAKK.

The protein belongs to the universal ribosomal protein uL2 family. In terms of assembly, part of the 50S ribosomal subunit. Forms a bridge to the 30S subunit in the 70S ribosome.

One of the primary rRNA binding proteins. Required for association of the 30S and 50S subunits to form the 70S ribosome, for tRNA binding and peptide bond formation. It has been suggested to have peptidyltransferase activity; this is somewhat controversial. Makes several contacts with the 16S rRNA in the 70S ribosome. This Mesoplasma florum (strain ATCC 33453 / NBRC 100688 / NCTC 11704 / L1) (Acholeplasma florum) protein is Large ribosomal subunit protein uL2.